Consider the following 727-residue polypeptide: Translation initiation factor IF-2, mitochondrial (727 aa).

A mitochondrion-targeting transit peptide spans Met1–Ala29. Residues Pro178 to Lys348 form the tr-type G domain. The G1 stretch occupies residues Gly187–Thr194. Gly187–Thr194 is a GTP binding site. The tract at residues Gly212–His216 is G2. GTP is bound by residues Asp234–Gly237 and Asn288–Asp291. Residues Asp234 to Gly237 are G3. The segment at Asn288 to Asp291 is G4. A G5 region spans residues Ser324 to Leu326. Residue Thr688 is modified to Phosphothreonine.

Belongs to the TRAFAC class translation factor GTPase superfamily. Classic translation factor GTPase family. IF-2 subfamily. Monomer. As to expression, expressed in all tissues examined. Highest level in skeletal muscle.

It is found in the mitochondrion. In terms of biological role, one of the essential components for the initiation of protein synthesis. Protects formylmethionyl-tRNA from spontaneous hydrolysis and promotes its binding to the 30S ribosomal subunits. Also involved in the hydrolysis of GTP during the formation of the 70S ribosomal complex. This is Translation initiation factor IF-2, mitochondrial (MTIF2) from Homo sapiens (Human).